The sequence spans 142 residues: MKTFTAKPETVKRDWYVVDATGKTLGRLATELARRLRGKHKAEYTPHVDTGDYIIVLNAEKVAVTGNKREDKMYYHHTGHIGGIKEATFEEMIARRPERVIEIAVKGMLPKGPLGRAMYRKLKVYAGNEHNHAAQQPQVLDI.

This sequence belongs to the universal ribosomal protein uL13 family. Part of the 50S ribosomal subunit.

Functionally, this protein is one of the early assembly proteins of the 50S ribosomal subunit, although it is not seen to bind rRNA by itself. It is important during the early stages of 50S assembly. In Klebsiella pneumoniae (strain 342), this protein is Large ribosomal subunit protein uL13.